Reading from the N-terminus, the 536-residue chain is Glucan 1,6-alpha-glucosidase (536 aa).

Residue Asp194 is the Nucleophile of the active site. Catalysis depends on Glu236, which acts as the Proton donor.

This sequence belongs to the glycosyl hydrolase 13 family.

The protein resides in the cytoplasm. It catalyses the reaction Hydrolysis of (1-&gt;6)-alpha-D-glucosidic linkages in (1-&gt;6)-alpha-D-glucans and derived oligosaccharides.. The physiological substrates may be short isomaltosaccharides. The protein is Glucan 1,6-alpha-glucosidase (dexB) of Streptococcus mutans serotype c (strain ATCC 700610 / UA159).